A 312-amino-acid chain; its full sequence is Olfactory receptor 2H2 (312 aa).

Over methionine 1–arginine 23 the chain is Extracellular. Asparagine 3 is a glycosylation site (N-linked (GlcNAc...) asparagine). Residues threonine 24–serine 47 form a helical membrane-spanning segment. Over alanine 48 to serine 55 the chain is Cytoplasmic. A helical transmembrane segment spans residues proline 56 to proline 77. The Extracellular segment spans residues glutamine 78–glutamine 98. A disulfide bond links cysteine 95 and cysteine 187. The chain crosses the membrane as a helical span at residues isoleucine 99 to phenylalanine 118. At aspartate 119–arginine 137 the chain is on the cytoplasmic side. A helical transmembrane segment spans residues leucine 138–valine 156. Topologically, residues glutamine 157–asparagine 193 are extracellular. The chain crosses the membrane as a helical span at residues glutamate 194–glycine 217. Over alanine 218–lysine 234 the chain is Cytoplasmic. Residues alanine 235–tyrosine 257 traverse the membrane as a helical segment. Residues leucine 258–lysine 270 are Extracellular-facing. The helical transmembrane segment at phenylalanine 271–leucine 290 threads the bilayer. At arginine 291–serine 312 the chain is on the cytoplasmic side.

The protein belongs to the G-protein coupled receptor 1 family.

Its subcellular location is the cell membrane. Its function is as follows. Odorant receptor. The protein is Olfactory receptor 2H2 (OR2H2) of Homo sapiens (Human).